Reading from the N-terminus, the 1132-residue chain is BTB/POZ domain-containing protein 7 (1132 aa).

Polar residues predominate over residues 1–10 (MGANASNYPH). The disordered stretch occupies residues 1–24 (MGANASNYPHSCSPRVGGNSQAQQ). Gly-2 carries N-myristoyl glycine lipidation. BTB domains lie at 142–211 (TDVD…GMED) and 247–341 (YDVV…DLSV). The BACK domain maps to 413-479 (YGSKWVHRQA…WGEHQLMKRI (67 aa)). Phosphoserine is present on Ser-722. 2 disordered regions span residues 897-1019 (LSQS…HLHR) and 1035-1132 (QRSD…KSAL). Basic residues predominate over residues 918-927 (RHTHTSRKKH). 4 stretches are compositionally biased toward basic and acidic residues: residues 928 to 939 (TLEQKTDTRENP), 1000 to 1019 (KKQEEARREYPLSPDGHLHR), 1083 to 1093 (PEERSGRRLAD), and 1105 to 1114 (TDLEREDSIS). Ser-1012 is modified (phosphoserine).

The protein localises to the nucleus. In terms of biological role, acts as a mediator of epithelial dynamics and organ branching by promoting cleft progression. Induced following accumulation of fibronectin in forming clefts, leading to local expression of the cell-scattering SNAIL2 and suppression of E-cadherin levels, thereby altering cell morphology and reducing cell-cell adhesion. This stimulates cell separation at the base of forming clefts by local, dynamic intercellular gap formation and promotes cleft progression. The protein is BTB/POZ domain-containing protein 7 (BTBD7) of Homo sapiens (Human).